A 453-amino-acid polypeptide reads, in one-letter code: UDP-N-acetylmuramate--L-alanine ligase (453 aa).

ATP is bound at residue 112–118 (GTHGKTT).

This sequence belongs to the MurCDEF family.

Its subcellular location is the cytoplasm. The catalysed reaction is UDP-N-acetyl-alpha-D-muramate + L-alanine + ATP = UDP-N-acetyl-alpha-D-muramoyl-L-alanine + ADP + phosphate + H(+). Its pathway is cell wall biogenesis; peptidoglycan biosynthesis. In terms of biological role, cell wall formation. This is UDP-N-acetylmuramate--L-alanine ligase from Lawsonia intracellularis (strain PHE/MN1-00).